We begin with the raw amino-acid sequence, 95 residues long: Ribosome-binding factor A (95 aa).

It belongs to the RbfA family. In terms of assembly, interacts with the 30S ribosomal subunit as a monomer, binding in a position overlapping the sites of the A and P site tRNAs, and displacing segments of the 16S rRNA. Probably contacts 16S rRNA and ribosomal protein S9 and S13.

The protein localises to the cytoplasm. In terms of biological role, one of several proteins that assist in the late maturation steps of the functional core of the 30S ribosomal subunit. Associates with free 30S ribosomal subunits (but not with 30S subunits that are part of 70S ribosomes or polysomes). Required for efficient processing of 16S rRNA. Probably interacts with the 5'-terminal helix region of 16S rRNA, bringing together different domains of the 30S ribosomal subunit which aids assembly. The sequence is that of Ribosome-binding factor A from Thermus thermophilus (strain ATCC 27634 / DSM 579 / HB8).